Here is a 188-residue protein sequence, read N- to C-terminus: Elongation factor P (188 aa).

Lys-34 is modified (N6-(3,6-diaminohexanoyl)-5-hydroxylysine).

Belongs to the elongation factor P family. Post-translationally, may be beta-lysylated on the epsilon-amino group of Lys-34 by the combined action of EpmA and EpmB, and then hydroxylated on the C5 position of the same residue by EpmC (if this protein is present). Lysylation is critical for the stimulatory effect of EF-P on peptide-bond formation. The lysylation moiety may extend toward the peptidyltransferase center and stabilize the terminal 3-CCA end of the tRNA. Hydroxylation of the C5 position on Lys-34 may allow additional potential stabilizing hydrogen-bond interactions with the P-tRNA.

It is found in the cytoplasm. It functions in the pathway protein biosynthesis; polypeptide chain elongation. Functionally, involved in peptide bond synthesis. Alleviates ribosome stalling that occurs when 3 or more consecutive Pro residues or the sequence PPG is present in a protein, possibly by augmenting the peptidyl transferase activity of the ribosome. Modification of Lys-34 is required for alleviation. The chain is Elongation factor P from Coxiella burnetii (strain CbuK_Q154) (Coxiella burnetii (strain Q154)).